Consider the following 418-residue polypeptide: Adenylosuccinate synthetase 2 (418 aa).

GTP is bound by residues 12–18 (GDEGKGR) and 40–42 (GHT). The active-site Proton acceptor is the Asp13. Mg(2+)-binding residues include Asp13 and Gly40. IMP is bound by residues 13-16 (DEGK), 38-41 (NAGH), Thr127, Lys141, Thr239, and Arg301. His41 functions as the Proton donor in the catalytic mechanism. A substrate-binding site is contributed by 297–303 (AVTGRPR). GTP is bound by residues Arg303, 329 to 331 (KID), and 407 to 409 (SVG).

Belongs to the adenylosuccinate synthetase family. Homodimer. The cofactor is Mg(2+).

It is found in the cytoplasm. It carries out the reaction IMP + L-aspartate + GTP = N(6)-(1,2-dicarboxyethyl)-AMP + GDP + phosphate + 2 H(+). It functions in the pathway purine metabolism; AMP biosynthesis via de novo pathway; AMP from IMP: step 1/2. Functionally, plays an important role in the de novo pathway of purine nucleotide biosynthesis. Catalyzes the first committed step in the biosynthesis of AMP from IMP. The chain is Adenylosuccinate synthetase 2 from Pseudoalteromonas translucida (strain TAC 125).